Here is a 236-residue protein sequence, read N- to C-terminus: Purine nucleoside phosphorylase DeoD-type 2 (236 aa).

His5 is a binding site for a purine D-ribonucleoside. Phosphate is bound by residues Gly21, Arg25, Arg44, and 88–91 (RVGS). Residues 180–182 (DME) and 204–205 (SD) each bind a purine D-ribonucleoside. Residue Asp205 is the Proton donor of the active site.

The protein belongs to the PNP/UDP phosphorylase family. As to quaternary structure, homohexamer; trimer of homodimers.

It carries out the reaction a purine D-ribonucleoside + phosphate = a purine nucleobase + alpha-D-ribose 1-phosphate. The enzyme catalyses a purine 2'-deoxy-D-ribonucleoside + phosphate = a purine nucleobase + 2-deoxy-alpha-D-ribose 1-phosphate. Its function is as follows. Catalyzes the reversible phosphorolytic breakdown of the N-glycosidic bond in the beta-(deoxy)ribonucleoside molecules, with the formation of the corresponding free purine bases and pentose-1-phosphate. The chain is Purine nucleoside phosphorylase DeoD-type 2 from Aliivibrio fischeri (strain ATCC 700601 / ES114) (Vibrio fischeri).